Reading from the N-terminus, the 1175-residue chain is Beta-agarase AgaO (1175 aa).

Residues 1-29 (MRLSKSQGILPLAHAVLAAAIAYSTAATA) form the signal peptide. One can recognise a CBM6 1 domain in the interval 32-164 (YRLEAEDFTN…QWNLDKMELA (133 aa)). A disordered region spans residues 169–208 (SSSSSGGGSTSSSSSGGSSSSSGSGSSSSGGSPEEGGHVS). Over residues 178 to 200 (TSSSSSGGSSSSSGSGSSSSGGS) the composition is skewed to low complexity. Residues 211–339 (FKLEAESAHH…QFNIDYVIFE (129 aa)) enclose the CBM6 2 domain. Residues 355–481 (IADVNDSCPG…ESGCSPSQVA (127 aa)) are disordered. The span at 382–393 (DTDKDGIADNRD) shows a compositional bias: basic and acidic residues. Residues 471–481 (NESGCSPSQVA) show a composition bias toward polar residues. Glutamate 661 serves as the catalytic Proton donor. Catalysis depends on glutamate 832, which acts as the Nucleophile.

It belongs to the glycosyl hydrolase 86 family.

The enzyme catalyses Hydrolysis of (1-&gt;4)-beta-D-galactosidic linkages in agarose, giving the tetramer as the predominant product.. Its activity is regulated as follows. Activity and stability are strongly enhanced by CaCl(2). Activity is not affected by sulfhydryl inhibitors such as iodoacetoamide and p-chloromercuribenzoate or by thiol reagents such as dithiothreitol and 2-mercaptoethanol. Strongly inhibited by N-bromosuccinimide and sodium dodecyl sulfate. Endo-type beta-agarase, which degrades agarose and agarose oligosaccharides more polymerized than hexamers to yield neoagarohexaose (NA6) as the main product, with lesser amounts of neoagarotetraose (NA4) and neoagarobiose (NA2). This Microbulbifer thermotolerans protein is Beta-agarase AgaO.